Consider the following 133-residue polypeptide: MAGSQRLKRMADSVQRELSELIRQELKDPRLGGLVTISAVKVSADMGYAEVYVTVMGRELGDEQSEAANKETLDVLNKASGFLRHELSRRIKTRITPRLRFHYDKTNAYGNYMFGLIEKAVQDLPEQSSEDKS.

Belongs to the RbfA family. Monomer. Binds 30S ribosomal subunits, but not 50S ribosomal subunits or 70S ribosomes.

The protein resides in the cytoplasm. Its function is as follows. One of several proteins that assist in the late maturation steps of the functional core of the 30S ribosomal subunit. Associates with free 30S ribosomal subunits (but not with 30S subunits that are part of 70S ribosomes or polysomes). Required for efficient processing of 16S rRNA. May interact with the 5'-terminal helix region of 16S rRNA. The polypeptide is Ribosome-binding factor A (Acinetobacter baylyi (strain ATCC 33305 / BD413 / ADP1)).